A 205-amino-acid chain; its full sequence is Holliday junction branch migration complex subunit RuvA (205 aa).

Positions 1-64 are domain I; the sequence is MIGRLRGTLA…EDAHLLYGFH (64 aa). A domain II region spans residues 65-143; that stretch reads EKRERELFRE…AWETSPAMFT (79 aa). Residues 144–153 form a flexible linker region; sequence LVSDGPVPVS. The segment at 154–205 is domain III; it reads GASTAEADAVSALVSLGYKPQEASKAVSAIKDKAGLSSEELIRRSLKGMITK.

The protein belongs to the RuvA family. In terms of assembly, homotetramer. Forms an RuvA(8)-RuvB(12)-Holliday junction (HJ) complex. HJ DNA is sandwiched between 2 RuvA tetramers; dsDNA enters through RuvA and exits via RuvB. An RuvB hexamer assembles on each DNA strand where it exits the tetramer. Each RuvB hexamer is contacted by two RuvA subunits (via domain III) on 2 adjacent RuvB subunits; this complex drives branch migration. In the full resolvosome a probable DNA-RuvA(4)-RuvB(12)-RuvC(2) complex forms which resolves the HJ.

The protein localises to the cytoplasm. In terms of biological role, the RuvA-RuvB-RuvC complex processes Holliday junction (HJ) DNA during genetic recombination and DNA repair, while the RuvA-RuvB complex plays an important role in the rescue of blocked DNA replication forks via replication fork reversal (RFR). RuvA specifically binds to HJ cruciform DNA, conferring on it an open structure. The RuvB hexamer acts as an ATP-dependent pump, pulling dsDNA into and through the RuvAB complex. HJ branch migration allows RuvC to scan DNA until it finds its consensus sequence, where it cleaves and resolves the cruciform DNA. In Pseudomonas putida (strain W619), this protein is Holliday junction branch migration complex subunit RuvA.